The primary structure comprises 694 residues: Polynucleotide 3'-phosphatase ZDP (694 aa).

2 consecutive PARP-type zinc fingers follow at residues 50 to 132 (VVAE…EQCG) and 165 to 247 (VIAD…EVNK). Cys-62, Cys-65, His-93, Cys-96, Cys-177, Cys-180, His-208, and Cys-211 together coordinate Zn(2+). Residues 266-331 (AIADNELTEE…SPDSSKVISE (66 aa)) form a disordered region. Basic and acidic residues predominate over residues 302 to 321 (ESKKPASDEISEQKTKDVKN). Polar residues predominate over residues 322-331 (SPDSSKVISE). The segment at 328–410 (VISEYAKSSR…ALKELVQQCG (83 aa)) adopts a PARP-type 3 zinc-finger fold. Zn(2+) is bound by residues Cys-340, Cys-343, His-371, and Cys-374.

The protein in the C-terminal section; belongs to the DNA 3' phosphatase family. As to quaternary structure, interacts with ROS1 (via the central region). Binds to XRCC1.

The protein localises to the nucleus. Its subcellular location is the nucleoplasm. It catalyses the reaction a 3'end (2'-deoxyribonucleotide 3'-phosphate)-DNA + H2O = a 3'-end 2'-deoxyribonucleotide-DNA + phosphate. With respect to regulation, activated by the presence of DNA. Stimulated by XRCC1. Nick-sensing 3'-phosphoesterase involved in a base excision repair pathway required for active DNA demethylation. The N-terminal DNA-binding domain binds specifically to gap sites and sharply bends the target DNA. Lacks 5'-kinase activity but is capable of 3'-phosphoglycolate end processing. Inactive on 3'-alpha,beta-unsaturated aldehyde (3'-dRP). Protects partially genes from transcriptional silencing by preventing promoter DNA hypermethylation. The chain is Polynucleotide 3'-phosphatase ZDP (ZDP) from Arabidopsis thaliana (Mouse-ear cress).